The following is a 276-amino-acid chain: MALKKVLTIAGSDTSAGAGMQADLKTFQELDVYGMVALTSIVTMDKETWSHDVTPIDMNIFEKQLETAISIGPNAIKTGMLGTQDIIKRAGDVFVESGADYFVVDPVMVCKGEDEVLNPGNTEAMIQYLLPKATVVTPNLFEAGQLSGLGKLTSIEDMKKAAQVIYDKGTPHVIIKGGKALDQDKSYDLYYDGQQFYQLTTDMFQQSYNHGAGCTFAAATTAYLANGKSPKEAIIAAKAFVASAIKNGWKMNDFVGPVDHGAYNRIEQINVEVTEV.

Asn-139 contacts ATP. Glu-142 is a binding site for Mg(2+). ATP-binding positions include 176 to 180, Asp-188, Gly-213, and Lys-238; that span reads KGGKA.

It belongs to the ThiD family.

The enzyme catalyses pyridoxal + ATP = pyridoxal 5'-phosphate + ADP + H(+). In terms of biological role, phosphorylates B6 vitamers; functions in a salvage pathway. Uses pyridoxal, pyridoxine, and pyridoxamine as substrates. This is Putative pyridoxine kinase (pdxK) from Staphylococcus epidermidis (strain ATCC 35984 / DSM 28319 / BCRC 17069 / CCUG 31568 / BM 3577 / RP62A).